The sequence spans 334 residues: S-adenosylmethionine:tRNA ribosyltransferase-isomerase (334 aa).

The protein belongs to the QueA family. In terms of assembly, monomer.

The protein localises to the cytoplasm. It catalyses the reaction 7-aminomethyl-7-carbaguanosine(34) in tRNA + S-adenosyl-L-methionine = epoxyqueuosine(34) in tRNA + adenine + L-methionine + 2 H(+). The protein operates within tRNA modification; tRNA-queuosine biosynthesis. Its function is as follows. Transfers and isomerizes the ribose moiety from AdoMet to the 7-aminomethyl group of 7-deazaguanine (preQ1-tRNA) to give epoxyqueuosine (oQ-tRNA). The protein is S-adenosylmethionine:tRNA ribosyltransferase-isomerase of Aquifex aeolicus (strain VF5).